The sequence spans 292 residues: Phosphatidylglycerol--prolipoprotein diacylglyceryl transferase (292 aa).

The next 4 membrane-spanning stretches (helical) occupy residues 18 to 38 (LFGA…GLLI), 67 to 87 (LLTW…VLFY), 105 to 125 (GGMS…AFCL), and 129 to 149 (ISIL…LFLG). Arg150 lines the a 1,2-diacyl-sn-glycero-3-phospho-(1'-sn-glycerol) pocket. The next 3 helical transmembrane spans lie at 193–213 (QLYE…ILIW), 222–242 (GAVT…VEFV), and 266–286 (GLTM…YFML).

It belongs to the Lgt family.

It is found in the cell inner membrane. It carries out the reaction L-cysteinyl-[prolipoprotein] + a 1,2-diacyl-sn-glycero-3-phospho-(1'-sn-glycerol) = an S-1,2-diacyl-sn-glyceryl-L-cysteinyl-[prolipoprotein] + sn-glycerol 1-phosphate + H(+). Its pathway is protein modification; lipoprotein biosynthesis (diacylglyceryl transfer). In terms of biological role, catalyzes the transfer of the diacylglyceryl group from phosphatidylglycerol to the sulfhydryl group of the N-terminal cysteine of a prolipoprotein, the first step in the formation of mature lipoproteins. The sequence is that of Phosphatidylglycerol--prolipoprotein diacylglyceryl transferase from Cereibacter sphaeroides (strain ATCC 17025 / ATH 2.4.3) (Rhodobacter sphaeroides).